The sequence spans 373 residues: D-alanine--D-alanine ligase (373 aa).

In terms of domain architecture, ATP-grasp spans 156–363; it reads KKLLAADGLP…YPTLLATMIE (208 aa). 184–239 contributes to the ATP binding site; that stretch reads CERLGLPVFVKPARGGSSIGVSRVSSWDQLPAAVARARRHDPKVIVEAAISGRELE. Residues Asp318, Glu330, and Asn332 each coordinate Mg(2+).

Belongs to the D-alanine--D-alanine ligase family. The cofactor is Mg(2+). Mn(2+) serves as cofactor.

It localises to the cytoplasm. It catalyses the reaction 2 D-alanine + ATP = D-alanyl-D-alanine + ADP + phosphate + H(+). It participates in cell wall biogenesis; peptidoglycan biosynthesis. Functionally, cell wall formation. The polypeptide is D-alanine--D-alanine ligase (Mycobacterium bovis (strain BCG / Pasteur 1173P2)).